Consider the following 184-residue polypeptide: Large ribosomal subunit protein uL15 (184 aa).

The disordered stretch occupies residues 1 to 55 (MDLSSLSPAKGSVKNKKRVGRGQGSGNGTTAGKGNKGQQSRSGYKRPVSEGGQMP). Over residues 21 to 35 (RGQGSGNGTTAGKGN) the composition is skewed to gly residues.

This sequence belongs to the universal ribosomal protein uL15 family. As to quaternary structure, part of the 50S ribosomal subunit.

Its function is as follows. Binds to the 23S rRNA. The chain is Large ribosomal subunit protein uL15 from Prosthecochloris aestuarii (strain DSM 271 / SK 413).